The following is a 215-amino-acid chain: MALVPYTDSGVQSLKRFHDSSASFKFVNHNIEIKQDWKQLGVAAVVWDAALVLCMYLESEGIHLQNSSVIELGAGTGLVGIVAALLGAQVTITDRDLAMEFLRMNVRDNIPKDSLHRVSVRALNWGKSLEEFSTYDFILGADIIYLEETFPDLLQTFLHLSSQQSVILLSSRLRYQRDHDFLEMMKLHFTIADVYYDKNTDVHIFRAQLRQRKEL.

S-adenosyl-L-methionine is bound by residues tryptophan 47, 73 to 75, aspartate 94, tryptophan 125, and alanine 141; that span reads GAG.

It belongs to the methyltransferase superfamily. METTL21 family.

It is found in the cytoplasm. It carries out the reaction L-lysyl-[protein] + 3 S-adenosyl-L-methionine = N(6),N(6),N(6)-trimethyl-L-lysyl-[protein] + 3 S-adenosyl-L-homocysteine + 3 H(+). In terms of biological role, protein-lysine methyltransferase that selectively trimethylates residues in heat shock protein 70 (HSP70) family members. The sequence is that of Protein N-lysine methyltransferase METTL21A (mettl21a) from Xenopus tropicalis (Western clawed frog).